The primary structure comprises 184 residues: Large ribosomal subunit protein uL5 (184 aa).

Belongs to the universal ribosomal protein uL5 family. As to quaternary structure, part of the 50S ribosomal subunit; part of the 5S rRNA/L5/L18/L25 subcomplex. Contacts the 5S rRNA and the P site tRNA. Forms a bridge to the 30S subunit in the 70S ribosome.

Its function is as follows. This is one of the proteins that bind and probably mediate the attachment of the 5S RNA into the large ribosomal subunit, where it forms part of the central protuberance. In the 70S ribosome it contacts protein S13 of the 30S subunit (bridge B1b), connecting the 2 subunits; this bridge is implicated in subunit movement. Contacts the P site tRNA; the 5S rRNA and some of its associated proteins might help stabilize positioning of ribosome-bound tRNAs. The sequence is that of Large ribosomal subunit protein uL5 from Fervidobacterium nodosum (strain ATCC 35602 / DSM 5306 / Rt17-B1).